We begin with the raw amino-acid sequence, 314 residues long: Small ribosomal subunit biogenesis GTPase RsgA (314 aa).

The disordered stretch occupies residues 1-21 (MKRAPTKQPAKPAARGGERAQ). The CP-type G domain occupies 85–246 (SDQFKSKLFA…LIDSPGFQEF (162 aa)). Residues 134–137 (NKID) and 188–196 (GQSGMGKST) each bind GTP. Residues cysteine 270, cysteine 275, histidine 277, and cysteine 283 each contribute to the Zn(2+) site.

This sequence belongs to the TRAFAC class YlqF/YawG GTPase family. RsgA subfamily. In terms of assembly, monomer. Associates with 30S ribosomal subunit, binds 16S rRNA. Requires Zn(2+) as cofactor.

It is found in the cytoplasm. In terms of biological role, one of several proteins that assist in the late maturation steps of the functional core of the 30S ribosomal subunit. Helps release RbfA from mature subunits. May play a role in the assembly of ribosomal proteins into the subunit. Circularly permuted GTPase that catalyzes slow GTP hydrolysis, GTPase activity is stimulated by the 30S ribosomal subunit. The polypeptide is Small ribosomal subunit biogenesis GTPase RsgA (Burkholderia pseudomallei (strain 1710b)).